Here is an 886-residue protein sequence, read N- to C-terminus: Methanogenesis regulatory histidine kinase FilI (886 aa).

The next 2 helical transmembrane spans lie at 7–27 (ILAF…TFMC) and 270–290 (VVGI…FLEL). Residues 290–344 (LSILMPLATITSSVEAIREQEKGQGSRIPTVGPAELATLAESINEMLDHLESYNQ) form the HAMP domain. The PAS domain maps to 349–419 (SEKRFRTIVD…EKDAGVLSGE (71 aa)). In terms of domain architecture, PAC spans 421-473 (FVGEVSAHTRAGSSMTFHAVKVPLRDDRGQVTGICGIARDITDIKEAGVELLK). The region spanning 674–886 (TVSHDLRSPL…TCVLFTLPTP (213 aa)) is the Histidine kinase domain. A Phosphohistidine; by autocatalysis modification is found at His677.

In terms of processing, autophosphorylated.

The protein resides in the cell membrane. It carries out the reaction ATP + protein L-histidine = ADP + protein N-phospho-L-histidine.. Member of the two-component regulatory system FilI/FilRs, which is involved in the regulation of methanogenesis. Autophosphorylates and specifically transfers the phosphoryl group to both FilR1 and FilR2. Its function is as follows. Could also catalyze the synthesis of the quorum sensing (QS) signal molecules carboxyl-acyl homoserine lactones (AHLs), which regulate the transition of the cellular morphology from short cells to filaments and of the carbon metabolic flux from biomass formation to methane production. In Methanothrix harundinacea (strain 6Ac) (Methanosaeta harundinacea), this protein is Methanogenesis regulatory histidine kinase FilI.